The following is a 332-amino-acid chain: 2,3-diketo-L-gulonate reductase (332 aa).

The active-site Proton donor is the H44. NAD(+)-binding positions include 168 to 174 (ITMVDMS), 224 to 225 (WK), and 304 to 306 (GHE).

It belongs to the LDH2/MDH2 oxidoreductase family. DlgD subfamily. In terms of assembly, homodimer.

It localises to the cytoplasm. It carries out the reaction 3-dehydro-L-gulonate + NAD(+) = 2,3-dioxo-L-gulonate + NADH + H(+). The catalysed reaction is 3-dehydro-L-gulonate + NADP(+) = 2,3-dioxo-L-gulonate + NADPH + H(+). In terms of biological role, catalyzes the reduction of 2,3-diketo-L-gulonate in the presence of NADH, to form 3-keto-L-gulonate. The chain is 2,3-diketo-L-gulonate reductase from Haemophilus influenzae (strain ATCC 51907 / DSM 11121 / KW20 / Rd).